A 334-amino-acid polypeptide reads, in one-letter code: Dipeptide transport ATP-binding protein DppF (334 aa).

Residues 13 to 262 form the ABC transporter domain; that stretch reads LQAIDLKKHY…PRHPYTQALL (250 aa). 55-62 contributes to the ATP binding site; the sequence is GESGCGKS.

It belongs to the ABC transporter superfamily. The complex is composed of two ATP-binding proteins (DppD and DppF), two transmembrane proteins (DppB and DppC) and a solute-binding protein (DppA). MppA can replace DppA as binding protein for heme and ALA transport.

The protein resides in the cell inner membrane. The catalysed reaction is a dipeptide(out) + ATP + H2O = a dipeptide(in) + ADP + phosphate + H(+). In terms of biological role, part of the ABC transporter DppABCDF involved in dipeptide transport. Responsible for energy coupling to the transport system. Functionally, when a foreign outer membrane heme receptor is expressed in E.coli, DppABCDF can also transport heme and its precursor, 5-aminolevulinic acid (ALA), from the periplasm into the cytoplasm. This Escherichia coli (strain K12) protein is Dipeptide transport ATP-binding protein DppF (dppF).